We begin with the raw amino-acid sequence, 101 residues long: Small ribosomal subunit protein uS14A (101 aa).

Disordered regions lie at residues 1–20 and 28–72; these read MAKK…VARY and TEII…RPRG. 2 stretches are compositionally biased toward basic and acidic residues: residues 38–53 and 61–70; these read EAER…RQPR and RNRDSVDGRP.

Belongs to the universal ribosomal protein uS14 family. As to quaternary structure, part of the 30S ribosomal subunit. Contacts proteins S3 and S10.

In terms of biological role, binds 16S rRNA, required for the assembly of 30S particles and may also be responsible for determining the conformation of the 16S rRNA at the A site. This is Small ribosomal subunit protein uS14A from Streptomyces avermitilis (strain ATCC 31267 / DSM 46492 / JCM 5070 / NBRC 14893 / NCIMB 12804 / NRRL 8165 / MA-4680).